Consider the following 363-residue polypeptide: GDP-fucose transporter 1 (363 aa).

8 helical membrane-spanning segments follow: residues 33–55 (FLLR…ISMV), 75–97 (VTFY…ATCC), 110–129 (LKVA…MITF), 139–161 (VPFY…YLLL), 166–184 (SFYA…WLGI), 194–213 (SLTG…LNAI), 226–248 (IWRL…MIVL), and 263–285 (AHFW…VTGL).

It belongs to the TPT transporter family. SLC35C subfamily.

It is found in the golgi apparatus membrane. The catalysed reaction is GMP(out) + GDP-beta-L-fucose(in) = GMP(in) + GDP-beta-L-fucose(out). Its function is as follows. Antiporter specific for GDP-l-fucose and depending on the concomitant reverse transport of GMP. Involved in GDP-fucose import from the cytoplasm into the Golgi lumen. This chain is GDP-fucose transporter 1 (Slc35c1), found in Mus musculus (Mouse).